Consider the following 150-residue polypeptide: T-complex protein 1 subunit beta (150 aa).

Asp-35 is a binding site for Mg(2+). Residues Gly-36, Thr-37, Thr-38, and Ser-39 each contribute to the ADP site. ATP is bound by residues Gly-36, Thr-37, and Thr-38.

It belongs to the TCP-1 chaperonin family. Component of the chaperonin-containing T-complex (TRiC), a hexadecamer composed of two identical back-to-back stacked rings enclosing a protein folding chamber. Each ring is made up of eight different subunits: TCP1/CCT1, CCT2, CCT3, CCT4, CCT5, CCT6A/CCT6, CCT7, CCT8. Interacts with PACRG. Interacts with FLCN. Interacts with DLEC1. Interacts with SVEP1.

The protein localises to the cytoplasm. The catalysed reaction is ATP + H2O = ADP + phosphate + H(+). Its function is as follows. Component of the chaperonin-containing T-complex (TRiC), a molecular chaperone complex that assists the folding of actin, tubulin and other proteins upon ATP hydrolysis. The TRiC complex mediates the folding of WRAP53/TCAB1, thereby regulating telomere maintenance. As part of the TRiC complex may play a role in the assembly of BBSome, a complex involved in ciliogenesis regulating transports vesicles to the cilia. The sequence is that of T-complex protein 1 subunit beta from Mesocricetus auratus (Golden hamster).